Here is a 166-residue protein sequence, read N- to C-terminus: Large ribosomal subunit protein uL10 (166 aa).

The protein belongs to the universal ribosomal protein uL10 family. In terms of assembly, part of the ribosomal stalk of the 50S ribosomal subunit. The N-terminus interacts with L11 and the large rRNA to form the base of the stalk. The C-terminus forms an elongated spine to which L12 dimers bind in a sequential fashion forming a multimeric L10(L12)X complex.

Functionally, forms part of the ribosomal stalk, playing a central role in the interaction of the ribosome with GTP-bound translation factors. The protein is Large ribosomal subunit protein uL10 of Pseudomonas putida (strain W619).